The chain runs to 106 residues: DNA-directed RNA polymerase subunit Rpo6 (106 aa).

This sequence belongs to the archaeal Rpo6/eukaryotic RPB6 RNA polymerase subunit family. As to quaternary structure, part of the RNA polymerase complex.

The protein resides in the cytoplasm. It catalyses the reaction RNA(n) + a ribonucleoside 5'-triphosphate = RNA(n+1) + diphosphate. Its function is as follows. DNA-dependent RNA polymerase (RNAP) catalyzes the transcription of DNA into RNA using the four ribonucleoside triphosphates as substrates. The protein is DNA-directed RNA polymerase subunit Rpo6 of Pyrobaculum aerophilum (strain ATCC 51768 / DSM 7523 / JCM 9630 / CIP 104966 / NBRC 100827 / IM2).